Reading from the N-terminus, the 358-residue chain is Putative myc-like protein MYCLP1 (358 aa).

2 disordered regions span residues 150–171 and 219–245; these read ACSR…TVKK and QEGA…DKED. Over residues 227-242 the composition is skewed to basic and acidic residues; sequence PPKEALEREAPGGKDD. Residues 274–326 enclose the bHLH domain; it reads WTKKKYHSYLERKRRNDQRSRFLALRDEVPALASCSRVSKVMILVKATEYLHE.

As to quaternary structure, efficient DNA binding requires dimerization with another bHLH protein. Binds DNA as a heterodimer with MAX. In terms of tissue distribution, detected in adult testis.

It localises to the nucleus. The protein is Putative myc-like protein MYCLP1 (MYCLP1) of Homo sapiens (Human).